We begin with the raw amino-acid sequence, 1006 residues long: Pleckstrin homology domain-containing family G member 5 (1006 aa).

Disordered regions lie at residues 1–71 (MHYD…HTDD), 148–198 (PAKP…DILA), and 212–242 (EASI…GDSW). The span at 36–45 (DLEEEEEESS) shows a compositional bias: acidic residues. Basic and acidic residues-rich tracts occupy residues 151–165 (PGDE…KDSK) and 183–194 (ERVDAQSRRESL). A compositionally biased stretch (low complexity) spans 224–242 (SSCSLPSGSSGSTNTGDSW). The DH domain maps to 336-528 (HQQEAVWELL…ERFIHHVNAC (193 aa)). The 101-residue stretch at 584-684 (QLLLEGSLRM…WVDTIYNAQN (101 aa)) folds into the PH domain. Disordered regions lie at residues 690–754 (RAQE…ASDG), 768–820 (DTLS…SAYG), and 837–863 (AELV…RRTP). Positions 704-726 (LEEEEDEQEEEEEEEEEEEEGED) are enriched in acidic residues. Polar residues-rich tracts occupy residues 727 to 754 (SGTS…ASDG) and 769 to 785 (TLSS…SQSD). A Phosphothreonine modification is found at Thr-729. Residue Ser-734 is modified to Phosphoserine. The segment covering 786-803 (ETSLSTTASSATPTSELL) has biased composition (low complexity). The segment covering 847-856 (PRVPSPPPSP) has biased composition (pro residues). Phosphoserine is present on residues Ser-851, Ser-876, and Ser-881. A disordered region spans residues 950 to 979 (AGSHRKRCGDLPSGASPRVQPEPPPGVSAQ).

As to quaternary structure, interacts with GIPC1/synectin and RHOA. In terms of tissue distribution, predominantly expressed in the peripheral nervous system and brain. Highest expression is observed in heart, lung, kidney, testis and moderate expression is present in spleen, pancreas, skeletal muscle, ovary and liver. Weakly expressed in glioblastoma (GBM) cell lines.

It is found in the cytoplasm. The protein localises to the perinuclear region. The protein resides in the cell membrane. It localises to the cell junction. Its subcellular location is the cell projection. It is found in the lamellipodium. Its function is as follows. Functions as a guanine exchange factor (GEF) for RAB26 and thus regulates autophagy of synaptic vesicles in axon terminal of motoneurons. Involved in the control of neuronal cell differentiation. Plays a role in angiogenesis through regulation of endothelial cells chemotaxis. Also affects the migration, adhesion, and matrix/bone degradation in macrophages and osteoclasts. This Homo sapiens (Human) protein is Pleckstrin homology domain-containing family G member 5 (PLEKHG5).